The chain runs to 766 residues: Pumilio domain-containing protein 12 (766 aa).

Disordered stretches follow at residues 63-98 (KKSS…KSKK) and 152-197 (AQEE…GDES). Over residues 79 to 88 (SLCSESSFGS) the composition is skewed to polar residues. The segment covering 179-193 (PADDENLESVDEQAG) has biased composition (acidic residues). The 358-residue stretch at 245–602 (ARAQKCKELW…LYAGITENLY (358 aa)) folds into the PUM-HD domain. 4 Pumilio repeats span residues 313-348 (ELTP…IIIN), 461-496 (SLKD…LIVK), 497-534 (NFKD…VIVS), and 535-571 (ELAN…REIT).

The sequence is that of Pumilio domain-containing protein 12 (puf-12) from Caenorhabditis elegans.